The sequence spans 198 residues: Pyridoxal 5'-phosphate synthase subunit PdxT (198 aa).

Position 49–51 (49–51 (GES)) interacts with L-glutamine. The active-site Nucleophile is C81. L-glutamine contacts are provided by residues R113 and 141–142 (IR). Active-site charge relay system residues include H177 and E179.

The protein belongs to the glutaminase PdxT/SNO family. As to quaternary structure, in the presence of PdxS, forms a dodecamer of heterodimers. Only shows activity in the heterodimer.

The catalysed reaction is aldehydo-D-ribose 5-phosphate + D-glyceraldehyde 3-phosphate + L-glutamine = pyridoxal 5'-phosphate + L-glutamate + phosphate + 3 H2O + H(+). It catalyses the reaction L-glutamine + H2O = L-glutamate + NH4(+). It functions in the pathway cofactor biosynthesis; pyridoxal 5'-phosphate biosynthesis. Catalyzes the hydrolysis of glutamine to glutamate and ammonia as part of the biosynthesis of pyridoxal 5'-phosphate. The resulting ammonia molecule is channeled to the active site of PdxS. The chain is Pyridoxal 5'-phosphate synthase subunit PdxT from Mycobacterium ulcerans (strain Agy99).